Reading from the N-terminus, the 331-residue chain is Vitamin B12 import system permease protein BtuC (331 aa).

9 helical membrane-spanning segments follow: residues 18–38 (WLFG…CAGE), 64–84 (LAVL…QALF), 91–111 (PGLL…VLLG), 114–134 (VLPG…ITFI), 149–169 (LLAG…AVYF), 194–214 (LWLM…SQPL), 243–263 (GWMV…GLVI), 277–297 (VLLP…DIIA), and 305–325 (ELPI…WLLL).

This sequence belongs to the binding-protein-dependent transport system permease family. FecCD subfamily. In terms of assembly, the complex is composed of two ATP-binding proteins (BtuD), two transmembrane proteins (BtuC) and a solute-binding protein (BtuF).

The protein localises to the cell inner membrane. Its function is as follows. Part of the ABC transporter complex BtuCDF involved in vitamin B12 import. Involved in the translocation of the substrate across the membrane. The protein is Vitamin B12 import system permease protein BtuC of Klebsiella pneumoniae subsp. pneumoniae (strain ATCC 700721 / MGH 78578).